The primary structure comprises 500 residues: Glycerol kinase (500 aa).

Residue Thr-13 participates in ADP binding. ATP is bound by residues Thr-13, Thr-14, and Ser-15. Sn-glycerol 3-phosphate is bound at residue Thr-13. Residue Arg-17 participates in ADP binding. Positions 83, 84, 135, and 245 each coordinate sn-glycerol 3-phosphate. Residues Arg-83, Glu-84, Tyr-135, Asp-245, and Gln-246 each coordinate glycerol. Residues Thr-267 and Gly-310 each contribute to the ADP site. Residues Thr-267, Gly-310, Gln-314, and Gly-411 each coordinate ATP. Positions 411 and 415 each coordinate ADP.

Belongs to the FGGY kinase family. As to quaternary structure, homotetramer and homodimer (in equilibrium).

It carries out the reaction glycerol + ATP = sn-glycerol 3-phosphate + ADP + H(+). The protein operates within polyol metabolism; glycerol degradation via glycerol kinase pathway; sn-glycerol 3-phosphate from glycerol: step 1/1. Its activity is regulated as follows. Activated by phosphorylation and inhibited by fructose 1,6-bisphosphate (FBP). Its function is as follows. Key enzyme in the regulation of glycerol uptake and metabolism. Catalyzes the phosphorylation of glycerol to yield sn-glycerol 3-phosphate. The protein is Glycerol kinase of Carboxydothermus hydrogenoformans (strain ATCC BAA-161 / DSM 6008 / Z-2901).